The primary structure comprises 598 residues: Elongation factor 4 (598 aa).

The 183-residue stretch at 5-187 folds into the tr-type G domain; sequence ANIRNFSIIA…ALVEFIPAPT (183 aa). GTP-binding positions include 17–22 and 134–137; these read DHGKST and NKID.

It belongs to the TRAFAC class translation factor GTPase superfamily. Classic translation factor GTPase family. LepA subfamily.

The protein resides in the cell inner membrane. The enzyme catalyses GTP + H2O = GDP + phosphate + H(+). Required for accurate and efficient protein synthesis under certain stress conditions. May act as a fidelity factor of the translation reaction, by catalyzing a one-codon backward translocation of tRNAs on improperly translocated ribosomes. Back-translocation proceeds from a post-translocation (POST) complex to a pre-translocation (PRE) complex, thus giving elongation factor G a second chance to translocate the tRNAs correctly. Binds to ribosomes in a GTP-dependent manner. This Psychrobacter arcticus (strain DSM 17307 / VKM B-2377 / 273-4) protein is Elongation factor 4.